A 135-amino-acid polypeptide reads, in one-letter code: MLSGQLVVRLFSMASRVCMSRGSAGSGVIGPVEAAIRTKLEQALNPEVLELRNESGGHAVPPGSETHFRVAVVSSRFEGLSPLQRHRLVHAALSEELAGPVHALAIQARTPAQWKENPQLDTSPACLGGSKKSRN.

A Phosphoserine modification is found at Ser81. Residues 114 to 135 are disordered; sequence WKENPQLDTSPACLGGSKKSRN.

This sequence belongs to the BolA/IbaG family. As to quaternary structure, interacts with GLRX5.

The protein localises to the mitochondrion. Functionally, acts as a mitochondrial iron-sulfur (Fe-S) cluster assembly factor that facilitates (Fe-S) cluster insertion into a subset of mitochondrial proteins. Probably acts together with the monothiol glutaredoxin GLRX5. May protect cells against oxidative stress. The sequence is that of BolA-like protein 1 (BOLA1) from Bos taurus (Bovine).